A 345-amino-acid chain; its full sequence is Beta-hexosaminidase (345 aa).

Residues aspartate 60, arginine 68, arginine 132, and lysine 162–histidine 163 contribute to the substrate site. Histidine 175 serves as the catalytic Proton donor/acceptor. The active-site Nucleophile is aspartate 247.

Belongs to the glycosyl hydrolase 3 family. NagZ subfamily.

The protein resides in the cytoplasm. The enzyme catalyses Hydrolysis of terminal non-reducing N-acetyl-D-hexosamine residues in N-acetyl-beta-D-hexosaminides.. The protein operates within cell wall biogenesis; peptidoglycan recycling. In terms of biological role, plays a role in peptidoglycan recycling by cleaving the terminal beta-1,4-linked N-acetylglucosamine (GlcNAc) from peptide-linked peptidoglycan fragments, giving rise to free GlcNAc, anhydro-N-acetylmuramic acid and anhydro-N-acetylmuramic acid-linked peptides. The protein is Beta-hexosaminidase of Actinobacillus pleuropneumoniae serotype 3 (strain JL03).